A 341-amino-acid polypeptide reads, in one-letter code: Putative amino-acid ABC transporter-binding protein YhdW (341 aa).

Residues Met-1–Ala-19 form the signal peptide.

It belongs to the bacterial solute-binding protein 3 family.

It localises to the periplasm. Functionally, probably part of the binding-protein-dependent transport system YdhWXYZ for an amino acid. The sequence is that of Putative amino-acid ABC transporter-binding protein YhdW (yhdW) from Escherichia coli O157:H7.